The primary structure comprises 244 residues: Probable transcriptional regulatory protein DNO_1179 (244 aa).

The protein belongs to the TACO1 family.

The protein resides in the cytoplasm. This is Probable transcriptional regulatory protein DNO_1179 from Dichelobacter nodosus (strain VCS1703A).